A 1206-amino-acid chain; its full sequence is DNA-directed RNA polymerase subunit beta' (1206 aa).

Zn(2+)-binding residues include Cys60, Cys62, Cys75, and Cys78. The Mg(2+) site is built by Asp449, Asp451, and Asp453. The Zn(2+) site is built by Cys822, Cys896, Cys903, and Cys906.

It belongs to the RNA polymerase beta' chain family. The RNAP catalytic core consists of 2 alpha, 1 beta, 1 beta' and 1 omega subunit. When a sigma factor is associated with the core the holoenzyme is formed, which can initiate transcription. The cofactor is Mg(2+). Zn(2+) is required as a cofactor.

The catalysed reaction is RNA(n) + a ribonucleoside 5'-triphosphate = RNA(n+1) + diphosphate. DNA-dependent RNA polymerase catalyzes the transcription of DNA into RNA using the four ribonucleoside triphosphates as substrates. This chain is DNA-directed RNA polymerase subunit beta', found in Staphylococcus haemolyticus (strain JCSC1435).